Here is a 478-residue protein sequence, read N- to C-terminus: Ribulose bisphosphate carboxylase large chain (478 aa).

Positions 1-2 (MS) are excised as a propeptide. 2 residues coordinate substrate: asparagine 123 and threonine 173. The active-site Proton acceptor is lysine 175. Lysine 177 contacts substrate. Mg(2+) is bound by residues lysine 201, aspartate 203, and glutamate 204. Lysine 201 is modified (N6-carboxylysine). Position 208 is a phosphoserine (serine 208). Histidine 294 serves as the catalytic Proton acceptor. Substrate is bound by residues arginine 295 and histidine 327. Position 330 is a phosphothreonine (threonine 330). Serine 379 provides a ligand contact to substrate.

The protein belongs to the RuBisCO large chain family. Type I subfamily. In terms of assembly, heterohexadecamer of 8 large chains and 8 small chains; disulfide-linked. The disulfide link is formed within the large subunit homodimers. Mg(2+) serves as cofactor. In terms of processing, the disulfide bond which can form in the large chain dimeric partners within the hexadecamer appears to be associated with oxidative stress and protein turnover.

The protein resides in the plastid. It localises to the chloroplast. The catalysed reaction is 2 (2R)-3-phosphoglycerate + 2 H(+) = D-ribulose 1,5-bisphosphate + CO2 + H2O. The enzyme catalyses D-ribulose 1,5-bisphosphate + O2 = 2-phosphoglycolate + (2R)-3-phosphoglycerate + 2 H(+). Its function is as follows. RuBisCO catalyzes two reactions: the carboxylation of D-ribulose 1,5-bisphosphate, the primary event in carbon dioxide fixation, as well as the oxidative fragmentation of the pentose substrate in the photorespiration process. Both reactions occur simultaneously and in competition at the same active site. The sequence is that of Ribulose bisphosphate carboxylase large chain from Lepidium virginicum (Virginia pepperweed).